The sequence spans 218 residues: 7-cyano-7-deazaguanine synthase (218 aa).

9–19 (FSGGMDSFTVL) is an ATP binding site. C185, C193, C196, and C199 together coordinate Zn(2+).

It belongs to the QueC family. The cofactor is Zn(2+).

It catalyses the reaction 7-carboxy-7-deazaguanine + NH4(+) + ATP = 7-cyano-7-deazaguanine + ADP + phosphate + H2O + H(+). The protein operates within purine metabolism; 7-cyano-7-deazaguanine biosynthesis. In terms of biological role, catalyzes the ATP-dependent conversion of 7-carboxy-7-deazaguanine (CDG) to 7-cyano-7-deazaguanine (preQ(0)). The polypeptide is 7-cyano-7-deazaguanine synthase (Pseudoalteromonas atlantica (strain T6c / ATCC BAA-1087)).